A 306-amino-acid polypeptide reads, in one-letter code: Glycine--tRNA ligase alpha subunit (306 aa).

It belongs to the class-II aminoacyl-tRNA synthetase family. In terms of assembly, tetramer of two alpha and two beta subunits.

It localises to the cytoplasm. The catalysed reaction is tRNA(Gly) + glycine + ATP = glycyl-tRNA(Gly) + AMP + diphosphate. In Aliivibrio fischeri (strain ATCC 700601 / ES114) (Vibrio fischeri), this protein is Glycine--tRNA ligase alpha subunit.